The sequence spans 329 residues: MNAPVRVAVTGAAGQIGYSLLFRIASGEMLGQNQPVILQLLDLPQAQNAVKGVMMELEDCAFPLLAGMVATDDPNVAFKDADICLLVGARPRSKGMERADLLEANGAIFTVQGKAIAENAKEDVKVLVVGNPANTNAYIARKAAEKVGRTNPANYTAMLRLDHNRALSQLAAKTGKAVASIENMAVWGNHSPTMYADYRFATVNGESVKSMINDEAWNRDVFLPTVGKRGAAIIEARGLSSAASAANAAIDHIRDWVLGTNGKWVTMGIPSDGSYGIPEGVTYGFPVTCKDGKYEIVQGLEIDEFSRACMNKTLAELEEERQGVAHLLG.

11 to 17 (GAAGQIG) is a binding site for NAD(+). Substrate-binding residues include arginine 92 and arginine 98. Residues asparagine 105, glutamine 112, and 129–131 (VGN) contribute to the NAD(+) site. The substrate site is built by asparagine 131 and arginine 165. Histidine 190 acts as the Proton acceptor in catalysis.

This sequence belongs to the LDH/MDH superfamily. MDH type 2 family.

It carries out the reaction (S)-malate + NAD(+) = oxaloacetate + NADH + H(+). Its function is as follows. Catalyzes the reversible oxidation of malate to oxaloacetate. This Laribacter hongkongensis (strain HLHK9) protein is Malate dehydrogenase.